A 242-amino-acid polypeptide reads, in one-letter code: MFNISYAKRNAKYLFKLLAWCMMIEEAGPNIGNKQKVVLQLSKMLIMYIILHINAAFWTWRGYLKRCVLHFVFPRIFLPLLSDSPTITQAKKPSYCFAMDVGGEDISDLQVDQIVEEYSMDDLIRDRFRLSAISIAEAEAKKNGMEIGGPVVACVADLAFKYAENVAKDLELFAHHAGRKVVNMDDVVLSAHRNDNLAASLRSLCNELKAKEPQSERKRKKGSAKKEDKASSSNAVRITTDL.

The tract at residues 208-242 (LKAKEPQSERKRKKGSAKKEDKASSSNAVRITTDL) is disordered. Polar residues predominate over residues 231-242 (SSSNAVRITTDL).

Belongs to the TAF9 family. CENP-S/MHF1 subfamily.

The protein resides in the nucleus. Involved in the promotion of spontaneous somatic homologous recombination (HR) events, which is opposite to the function of FANCM in ordered HR. Only FANCM is essential for replicative repair in the absence of the endonuclease MUS81. Acts in the same pathway as FANCM to restrain class II meiotic crossing over (CO), and acts with FANCM during meiosis to repair interstrand cross-links (ICLs). This common pathway between MHF1 and FANCM is in parallel to the pathway that involves the RECQ4A helicase. The polypeptide is Protein MHF1 homolog (Arabidopsis thaliana (Mouse-ear cress)).